The primary structure comprises 169 residues: MDLSRIPAQPKAGLINVLIEIPAGSKNKYEFDKDMNCFALDRVLYSSVQYPYDYGFIPNTLADDGDPLDGMVIMDQPTFPGCVITARPIGMLEMIDGGDRDEKILCVPAKDPRYTYVKSINDLAGHRLDEIAEFFRSYKNLEKKVTEILGWKDVDAVLPLVEECVKNYK.

N-formylmethionine is present on Met-1. Lys-28, Arg-42, and Tyr-54 together coordinate substrate. Positions 64, 69, and 101 each coordinate Mg(2+). Tyr-138 provides a ligand contact to substrate.

This sequence belongs to the PPase family. As to quaternary structure, homohexamer. Mg(2+) serves as cofactor.

It localises to the cytoplasm. It carries out the reaction diphosphate + H2O = 2 phosphate + H(+). With respect to regulation, inhibited by ATP, but not by fructose 1,6-bisphosphate or 2-phosphoglycerate. Functionally, hydrolyzes PPi generated in anabolic reactions. Catalyzes the hydrolysis of inorganic pyrophosphate (PPi) forming two phosphate ions. The protein is Inorganic pyrophosphatase of Synechocystis sp. (strain ATCC 27184 / PCC 6803 / Kazusa).